Here is a 220-residue protein sequence, read N- to C-terminus: Deoxyribose-phosphate aldolase (220 aa).

Catalysis depends on aspartate 89, which acts as the Proton donor/acceptor. Lysine 151 (schiff-base intermediate with acetaldehyde) is an active-site residue. Catalysis depends on lysine 180, which acts as the Proton donor/acceptor.

The protein belongs to the DeoC/FbaB aldolase family. DeoC type 1 subfamily.

The protein resides in the cytoplasm. It carries out the reaction 2-deoxy-D-ribose 5-phosphate = D-glyceraldehyde 3-phosphate + acetaldehyde. Its pathway is carbohydrate degradation; 2-deoxy-D-ribose 1-phosphate degradation; D-glyceraldehyde 3-phosphate and acetaldehyde from 2-deoxy-alpha-D-ribose 1-phosphate: step 2/2. Catalyzes a reversible aldol reaction between acetaldehyde and D-glyceraldehyde 3-phosphate to generate 2-deoxy-D-ribose 5-phosphate. The protein is Deoxyribose-phosphate aldolase of Bdellovibrio bacteriovorus (strain ATCC 15356 / DSM 50701 / NCIMB 9529 / HD100).